Reading from the N-terminus, the 186-residue chain is Protein GrpE (186 aa).

It belongs to the GrpE family. In terms of assembly, homodimer.

The protein localises to the cytoplasm. Functionally, participates actively in the response to hyperosmotic and heat shock by preventing the aggregation of stress-denatured proteins, in association with DnaK and GrpE. It is the nucleotide exchange factor for DnaK and may function as a thermosensor. Unfolded proteins bind initially to DnaJ; upon interaction with the DnaJ-bound protein, DnaK hydrolyzes its bound ATP, resulting in the formation of a stable complex. GrpE releases ADP from DnaK; ATP binding to DnaK triggers the release of the substrate protein, thus completing the reaction cycle. Several rounds of ATP-dependent interactions between DnaJ, DnaK and GrpE are required for fully efficient folding. This is Protein GrpE from Novosphingobium aromaticivorans (strain ATCC 700278 / DSM 12444 / CCUG 56034 / CIP 105152 / NBRC 16084 / F199).